Consider the following 239-residue polypeptide: Geranylgeranylglyceryl phosphate synthase (239 aa).

Mg(2+) is bound by residues aspartate 18 and serine 45. Sn-glycerol 1-phosphate is bound by residues 166 to 172, 197 to 198, and 219 to 220; these read YLEAGSG, GG, and GT.

This sequence belongs to the GGGP/HepGP synthase family. Group II subfamily. Mg(2+) serves as cofactor.

The protein resides in the cytoplasm. The catalysed reaction is sn-glycerol 1-phosphate + (2E,6E,10E)-geranylgeranyl diphosphate = sn-3-O-(geranylgeranyl)glycerol 1-phosphate + diphosphate. It participates in membrane lipid metabolism; glycerophospholipid metabolism. Functionally, prenyltransferase that catalyzes the transfer of the geranylgeranyl moiety of geranylgeranyl diphosphate (GGPP) to the C3 hydroxyl of sn-glycerol-1-phosphate (G1P). This reaction is the first ether-bond-formation step in the biosynthesis of archaeal membrane lipids. The protein is Geranylgeranylglyceryl phosphate synthase of Pyrobaculum aerophilum (strain ATCC 51768 / DSM 7523 / JCM 9630 / CIP 104966 / NBRC 100827 / IM2).